Consider the following 583-residue polypeptide: Leucine aminopeptidase 2, chloroplastic (583 aa).

The transit peptide at 1–70 (MAVTLVTSFA…ISHATLGLTQ (70 aa)) directs the protein to the chloroplast. Positions 351 and 356 each coordinate Mn(2+). K363 is a catalytic residue. The Mn(2+) site is built by D376, D436, and E438. Residue R440 is part of the active site.

The protein belongs to the peptidase M17 family. As to quaternary structure, homohexamer (dimer of homotrimers). Requires Mn(2+) as cofactor.

The protein resides in the plastid. It is found in the chloroplast. It carries out the reaction Release of an N-terminal amino acid, Xaa-|-Yaa-, in which Xaa is preferably Leu, but may be other amino acids including Pro although not Arg or Lys, and Yaa may be Pro. Amino acid amides and methyl esters are also readily hydrolyzed, but rates on arylamides are exceedingly low.. The catalysed reaction is Release of N-terminal proline from a peptide.. Functionally, presumably involved in the processing and regular turnover of intracellular proteins. Catalyzes the removal of unsubstituted N-terminal amino acids from various peptides. Possesses leucine aminopeptidase activity against the model substrate leucine-amido methyl coumarin. Does not seem to possess Cys-Gly dipeptidase activity. In terms of biological role, functions as a molecular chaperone to protect proteins from heat-induced damage. The sequence is that of Leucine aminopeptidase 2, chloroplastic from Arabidopsis thaliana (Mouse-ear cress).